We begin with the raw amino-acid sequence, 303 residues long: E3 ubiquitin-protein ligase CHIP (303 aa).

Positions 1–10 are enriched in basic and acidic residues; that stretch reads MKGKEEKEGG. A disordered region spans residues 1-30; the sequence is MKGKEEKEGGARLGAGGGSPEKSPSAQELK. Lys-2 participates in a covalent cross-link: Glycyl lysine isopeptide (Lys-Gly) (interchain with G-Cter in ubiquitin). At Ser-19 the chain carries Phosphoserine. Residue Lys-22 forms a Glycyl lysine isopeptide (Lys-Gly) (interchain with G-Cter in ubiquitin) linkage. Ser-23 and Ser-25 each carry phosphoserine. TPR repeat units follow at residues 26–59, 60–93, and 95–127; these read AQELKEQGNRLFVGRKYPEAAACYGRAITRNPLV, AVYYTNRALCYLKMQQHEQALADCRRALELDGQS, and KAHFFLGQCQLEMESYDEAIANLQRAYSLAKEQ. The tract at residues 101-200 is required for interaction with MAPK7; sequence GQCQLEMESY…SHVRAQQACI (100 aa). The required for interaction with and ubiquitination of MYOCD stretch occupies residues 142-196; sequence AKKKRWNSIEERRIHQESELHSYLSRLIAAERERELEECQRNHEGDEDDSHVRAQ. Residues 143–197 form a required for interaction with FOXO1 region; that stretch reads KKKRWNSIEERRIHQESELHSYLSRLIAAERERELEECQRNHEGDEDDSHVRAQQ. A required for ubiquitination of FOXO1 region spans residues 143-303; that stretch reads KKKRWNSIEE…ISENGWVEDY (161 aa). Position 149 is a phosphoserine (Ser-149). Glycyl lysine isopeptide (Lys-Gly) (interchain with G-Cter in ubiquitin) cross-links involve residues Lys-221 and Lys-255. The 75-residue stretch at 226-300 folds into the U-box domain; sequence DIPDYLCGKI…DAFISENGWV (75 aa). The residue at position 273 (Ser-273) is a Phosphoserine.

In terms of assembly, homodimer. Interacts with BAG2. Interacts with E2 ubiquitin conjugating enzymes UBE2D1, UBE2D2 and UBE2D3. Detected in a ternary complex containing STUB1, HSPA1A and HSPBP1. Part of a complex composed of STUB1/CHIP, VCP/p97, CHRNA3, and UBXN2A that modulates the ubiquitination and endoplasmic reticulum-associated degradation (ERAD) of CHRNA3. Within the complex UBXN2A acts as a scaffold protein required for the interaction of CHRNA3 with VCP/p97, this interaction also inhibits CHRNA3 ubiquitination by STUB1/CHIP and subsequently ERAD. Interacts with MKKS. Interacts with DNAAF4. Interacts (when monoubiquitinated) with ATXN3. Interacts with UBE2W. Interacts (via the U-box domain) with the UBE2V2-UBE2N heterodimer; the complex has a specific 'Lys-63'-linked polyubiquitination activity. Interacts with DNAJB6. Interacts with FLCN. Interacts with HSP90AA1. Interacts with HSP90. Interacts with UBE2N and UBE2V1. Interacts (via TPR repeats) with HSPA8 (via C-terminus). Interacts (via TPR repeats) with HSPA1A (via C-terminus). Interacts with the non-acetylated form of HSPA1A and HSPA1B. Interacts with SMAD3 and HSP90AB1. Interacts with UBE4B. Interacts with PRMT5. Interacts with MYOCD (via C-terminus). Interacts with FOXO1 (when phosphorylated on 'Ser-256'). Interacts with MAPK7/ERK5; the interaction is enhanced in the presence of IGF1 or MAP2K5 and promotes STUB1/CHIP E3 ligase activity. Interacts with and ubiquitinates ESR1; the interaction is promoted in the absence of estradiol (17-beta-estradiol/E2). Interacts with ESR2. Interacts with and ubiquitinates NFATC3; HSPA1A/HSP70 is required as a co-chaperone. In macrophages, interacts with PAQR3; the interaction promotes PPARG poylubiquitination and STUB1-mediated degradation. Component of the chaperone-assisted selective autophagy (CASA) complex consisting of BAG3, HSPA8/HSC70, HSPB8 and STUB1/CHIP. Post-translationally, monoubiquitinated at Lys-2 following cell stress by UBE2W, promoting the interaction with ATXN3. Auto-ubiquitinated; mediated by UBE2D1 and UBE2D2 and enhanced in the presence of MAP2K5. As to expression, expressed in differentiated myotubes (at protein level). Highly expressed in skeletal muscle, heart, pancreas, brain and placenta. Detected in kidney, liver and lung.

It is found in the cytoplasm. The protein resides in the nucleus. The protein localises to the mitochondrion. It carries out the reaction S-ubiquitinyl-[E2 ubiquitin-conjugating enzyme]-L-cysteine + [acceptor protein]-L-lysine = [E2 ubiquitin-conjugating enzyme]-L-cysteine + N(6)-ubiquitinyl-[acceptor protein]-L-lysine.. Its pathway is protein modification; protein ubiquitination. E3 ubiquitin-protein ligase which targets misfolded chaperone substrates towards proteasomal degradation. Plays a role in the maintenance of mitochondrial morphology and promotes mitophagic removal of dysfunctional mitochondria; thereby acts as a protector against apoptosis in response to cellular stress. Negatively regulates vascular smooth muscle contraction, via degradation of the transcriptional activator MYOCD and subsequent loss of transcription of genes involved in vascular smooth muscle contraction. Promotes survival and proliferation of cardiac smooth muscle cells via ubiquitination and degradation of FOXO1, resulting in subsequent repression of FOXO1-mediated transcription of pro-apoptotic genes. Ubiquitinates ICER-type isoforms of CREM and targets them for proteasomal degradation, thereby acts as a positive effector of MAPK/ERK-mediated inhibition of apoptosis in cardiomyocytes. Inhibits lipopolysaccharide-induced apoptosis and hypertrophy in cardiomyocytes, via ubiquitination and subsequent proteasomal degradation of NFATC3. Collaborates with ATXN3 in the degradation of misfolded chaperone substrates: ATXN3 restricting the length of ubiquitin chain attached to STUB1/CHIP substrates and preventing further chain extension. Ubiquitinates NOS1 in concert with Hsp70 and Hsp40. Modulates the activity of several chaperone complexes, including Hsp70, Hsc70 and Hsp90. Ubiquitinates CHRNA3 targeting it for endoplasmic reticulum-associated degradation in cortical neurons, as part of the STUB1-VCP-UBXN2A complex. Ubiquitinates and promotes ESR1 proteasomal degradation in response to age-related circulating estradiol (17-beta-estradiol/E2) decline, thereby promotes neuronal apoptosis in response to ischemic reperfusion injury. Mediates transfer of non-canonical short ubiquitin chains to HSPA8 that have no effect on HSPA8 degradation. Mediates polyubiquitination of DNA polymerase beta (POLB) at 'Lys-41', 'Lys-61' and 'Lys-81', thereby playing a role in base-excision repair: catalyzes polyubiquitination by amplifying the HUWE1/ARF-BP1-dependent monoubiquitination and leading to POLB-degradation by the proteasome. Mediates polyubiquitination of CYP3A4. Ubiquitinates EPHA2 and may regulate the receptor stability and activity through proteasomal degradation. Acts as a co-chaperone for HSPA1A and HSPA1B chaperone proteins and promotes ubiquitin-mediated protein degradation. Negatively regulates the suppressive function of regulatory T-cells (Treg) during inflammation by mediating the ubiquitination and degradation of FOXP3 in a HSPA1A/B-dependent manner. Catalyzes monoubiquitination of SIRT6, preventing its degradation by the proteasome. Likely mediates polyubiquitination and down-regulates plasma membrane expression of PD-L1/CD274, an immune inhibitory ligand critical for immune tolerance to self and antitumor immunity. Negatively regulates TGF-beta signaling by modulating the basal level of SMAD3 via ubiquitin-mediated degradation. Plays a role in the degradation of TP53. Mediates ubiquitination of RIPK3 leading to its subsequent proteasome-dependent degradation. May regulate myosin assembly in striated muscles together with UBE4B and VCP/p97 by targeting myosin chaperone UNC45B for proteasomal degradation. Ubiquitinates PPARG in macrophages playing a role in M2 macrophages polarization and angiogenesis. The sequence is that of E3 ubiquitin-protein ligase CHIP from Homo sapiens (Human).